The primary structure comprises 2224 residues: Coagulation factor V (2224 aa).

The N-terminal stretch at 1–28 (MFPGCPRLWVLVVLGTSWVGWGSQGTEA) is a signal peptide. 4 consecutive Plastocyanin-like domains span residues 30–193 (QLRQ…LLIC), 203–329 (TQKT…IKNC), 348–526 (KRWE…LLIC), and 536–684 (IQRA…DVKC). F5/8 type A domains lie at 30–329 (QLRQ…IKNC) and 348–684 (KRWE…DVKC). N-linked (GlcNAc...) asparagine glycans are attached at residues Asn51 and Asn55. Residues Asp139 and Asp140 each coordinate Ca(2+). Cys167 and Cys193 are oxidised to a cystine. Asn239, Asn297, Asn382, Asn460, and Asn468 each carry an N-linked (GlcNAc...) asparagine glycan. Cysteines 248 and 329 form a disulfide. Residues Cys500 and Cys526 are joined by a disulfide bond. Asn554 is a glycosylation site (N-linked (GlcNAc...) asparagine). An intrachain disulfide couples Cys603 to Cys684. Thr640 is modified (phosphothreonine). The tract at residues 692–1573 (SYEIFEPPES…PDNIAAWYLR (882 aa)) is b. 3 positions are modified to sulfotyrosine: Tyr693, Tyr724, and Tyr726. A propeptide spans 738–1573 (SFRNSSLNQE…PDNIAAWYLR (836 aa)) (activation peptide (connecting region)). 5 N-linked (GlcNAc...) asparagine glycosylation sites follow: Asn741, Asn752, Asn760, Asn776, and Asn782. Thr805 carries an O-linked (GalNAc...) threonine glycan. An N-linked (GlcNAc...) asparagine glycan is attached at Asn821. A compositionally biased stretch (polar residues) spans 822–831 (SSTAEHSSPY). The interval 822–842 (SSTAEHSSPYSEDPIEDPLQP) is disordered. Ser859 carries the phosphoserine; by FAM20C modification. The segment at 894-927 (LSQDTGSPSGMRPWEDLPSQDTGSPSRMRPWKDP) is disordered. 2 consecutive repeat copies span residues 895 to 911 (SQDT…EDLP) and 912 to 928 (SQDT…KDPP). The interval 895–928 (SQDTGSPSGMRPWEDLPSQDTGSPSRMRPWKDPP) is 2 X 17 AA tandem repeats. 2 N-linked (GlcNAc...) asparagine glycosylation sites follow: Asn938 and Asn977. Disordered stretches follow at residues 982-1001 (WGES…HPKF) and 1029-1048 (TRKK…PRTF). Residues 1029–1040 (TRKKKKEKHTHH) show a composition bias toward basic residues. N-linked (GlcNAc...) asparagine glycans are attached at residues Asn1074, Asn1083, Asn1103, and Asn1106. A disordered region spans residues 1097–1157 (LPDHNQNSSN…SSSPELSEML (61 aa)). The segment covering 1099 to 1111 (DHNQNSSNDTGQA) has biased composition (polar residues). Residues 1139 to 1154 (HSTSDPSHRSSSPELS) are compositionally biased toward low complexity. 35 repeat units span residues 1185–1193 (VISPDLSQV), 1194–1202 (TLSPELSQT), 1203–1211 (NLSPDLSHT), 1212–1220 (TLSPELIQR), 1221–1229 (NLSPALGQM), 1230–1238 (PISPDLSHT), 1239–1247 (TLSPDLSHT), 1248–1256 (TLSLDLSQT), 1257–1265 (NLSPELSQT), 1266–1274 (NLSPALGQM), 1275–1283 (PLSPDLSHT), 1284–1292 (TLSLDFSQT), 1293–1301 (NLSPELSHM), 1302–1310 (TLSPELSQT), 1311–1319 (NLSPALGQM), 1320–1328 (PISPDLSHT), 1329–1337 (TLSLDFSQT), 1338–1346 (NLSPELSQT), 1347–1355 (NLSPALGQM), 1356–1364 (PLSPDPSHT), 1365–1373 (TLSLDLSQT), 1374–1382 (NLSPELSQT), 1383–1391 (NLSPDLSEM), 1392–1400 (PLFADLSQI), 1401–1409 (PLTPDLDQM), 1410–1418 (TLSPDLGET), 1419–1427 (DLSPNFGQM), 1428–1436 (SLSPDLSQV), 1437–1445 (TLSPDISDT), 1446–1454 (TLLPDLSQI), 1455–1463 (SPPPDLDQI), 1464–1472 (FYPSESSQS), 1473–1481 (LLLQEFNES), 1482–1490 (FPYPDLGQM), and 1493–1501 (PSSPTLNDT). The interval 1185 to 1501 (VISPDLSQVT…SPSSPTLNDT (317 aa)) is 35 X 9 AA approximate tandem repeats of [TNP]-L-S-P-D-L-S-Q-T. The tract at residues 1341 to 1367 (PELSQTNLSPALGQMPLSPDPSHTTLS) is disordered. N-linked (GlcNAc...) asparagine glycosylation is present at Asn1479. Asn1499 is a glycosylation site (N-linked (GlcNAc...) asparagine). 3 positions are modified to sulfotyrosine: Tyr1522, Tyr1538, and Tyr1543. A glycan (N-linked (GlcNAc...) asparagine) is linked at Asn1559. 2 consecutive Plastocyanin-like domains span residues 1578–1751 (NRRN…LLIC) and 1761–1907 (NMPM…DRDC). The region spanning 1578 to 1907 (NRRNYYIAAE…TPFLIMDRDC (330 aa)) is the F5/8 type A 3 domain. Tyr1593 is subject to Sulfotyrosine. Residue Asn1703 is glycosylated (N-linked (GlcNAc...) asparagine). A disulfide bridge links Cys1725 with Cys1751. Residues His1843 and His1845 each contribute to the Cu cation site. 2 disulfides stabilise this stretch: Cys1907–Cys2061 and Cys2066–Cys2221. F5/8 type C domains follow at residues 1907–2061 (CRMP…LQGC) and 2066–2221 (CSTP…LFGC). N-linked (GlcNAc...) asparagine glycosylation is found at Asn2010 and Asn2209.

Belongs to the multicopper oxidase family. As to quaternary structure, factor Va, the activated form of factor V, is composed of a heavy chain and a light chain, non-covalently bound. The interaction between the two chains is calcium-dependent. Forms heterodimer with SERPINA5. In terms of processing, thrombin activates factor V proteolytically to the active cofactor, factor Va (formation of a heavy chain at the N-terminus and a light chain at the C-terminus). Sulfation is required for efficient thrombin cleavage and activation and for full procoagulant activity. Post-translationally, activated protein C inactivates factor V and factor Va by proteolytic degradation. In terms of processing, phosphorylated by FAM20C in the extracellular medium. As to expression, plasma.

Its subcellular location is the secreted. Inhibited by SERPINA5. Its function is as follows. Central regulator of hemostasis. It serves as a critical cofactor for the prothrombinase activity of factor Xa that results in the activation of prothrombin to thrombin. The sequence is that of Coagulation factor V (F5) from Homo sapiens (Human).